Reading from the N-terminus, the 557-residue chain is 2-succinyl-5-enolpyruvyl-6-hydroxy-3-cyclohexene-1-carboxylate synthase (557 aa).

The protein belongs to the TPP enzyme family. MenD subfamily. Homodimer. The cofactor is Mg(2+). Mn(2+) serves as cofactor. It depends on thiamine diphosphate as a cofactor.

It carries out the reaction isochorismate + 2-oxoglutarate + H(+) = 5-enolpyruvoyl-6-hydroxy-2-succinyl-cyclohex-3-ene-1-carboxylate + CO2. Its pathway is quinol/quinone metabolism; 1,4-dihydroxy-2-naphthoate biosynthesis; 1,4-dihydroxy-2-naphthoate from chorismate: step 2/7. It participates in quinol/quinone metabolism; menaquinone biosynthesis. Its function is as follows. Catalyzes the thiamine diphosphate-dependent decarboxylation of 2-oxoglutarate and the subsequent addition of the resulting succinic semialdehyde-thiamine pyrophosphate anion to isochorismate to yield 2-succinyl-5-enolpyruvyl-6-hydroxy-3-cyclohexene-1-carboxylate (SEPHCHC). In Staphylococcus aureus (strain bovine RF122 / ET3-1), this protein is 2-succinyl-5-enolpyruvyl-6-hydroxy-3-cyclohexene-1-carboxylate synthase.